A 696-amino-acid chain; its full sequence is DNA-directed RNA polymerase subunit beta' (696 aa).

Zn(2+)-binding residues include Cys-70, Cys-72, Cys-85, and Cys-88. Residues Asp-540, Asp-542, and Asp-544 each contribute to the Mg(2+) site.

It belongs to the RNA polymerase beta' chain family. RpoC1 subfamily. As to quaternary structure, in plastids the minimal PEP RNA polymerase catalytic core is composed of four subunits: alpha, beta, beta', and beta''. When a (nuclear-encoded) sigma factor is associated with the core the holoenzyme is formed, which can initiate transcription. It depends on Mg(2+) as a cofactor. Zn(2+) is required as a cofactor.

It localises to the plastid. The protein localises to the chloroplast. It catalyses the reaction RNA(n) + a ribonucleoside 5'-triphosphate = RNA(n+1) + diphosphate. DNA-dependent RNA polymerase catalyzes the transcription of DNA into RNA using the four ribonucleoside triphosphates as substrates. The sequence is that of DNA-directed RNA polymerase subunit beta' from Phaeodactylum tricornutum (strain CCAP 1055/1).